We begin with the raw amino-acid sequence, 187 residues long: ATP synthase subunit b (187 aa).

Residues 36–53 (PYQWVSVAMLVLIAIMLW) traverse the membrane as a helical segment.

The protein belongs to the ATPase B chain family. As to quaternary structure, F-type ATPases have 2 components, F(1) - the catalytic core - and F(0) - the membrane proton channel. F(1) has five subunits: alpha(3), beta(3), gamma(1), delta(1), epsilon(1). F(0) has four main subunits: a(1), b(2) and c(10-14). The alpha and beta chains form an alternating ring which encloses part of the gamma chain. F(1) is attached to F(0) by a central stalk formed by the gamma and epsilon chains, while a peripheral stalk is formed by the delta and b chains.

The protein resides in the cell inner membrane. In terms of biological role, f(1)F(0) ATP synthase produces ATP from ADP in the presence of a proton or sodium gradient. F-type ATPases consist of two structural domains, F(1) containing the extramembraneous catalytic core and F(0) containing the membrane proton channel, linked together by a central stalk and a peripheral stalk. During catalysis, ATP synthesis in the catalytic domain of F(1) is coupled via a rotary mechanism of the central stalk subunits to proton translocation. Functionally, component of the F(0) channel, it forms part of the peripheral stalk, linking F(1) to F(0). This is ATP synthase subunit b from Erythrobacter litoralis (strain HTCC2594).